The primary structure comprises 710 residues: Dual specificity protein kinase shkE (710 aa).

Low complexity-rich tracts occupy residues 83–94 (DVSDSNNNNSTS), 107–129 (NNNNNNNNNNNNNNNNNNNNNNN), and 197–208 (QKQQQSQASIQQ). Disordered regions lie at residues 83–136 (DVSD…PTVI) and 189–232 (QHLT…IPPE). Positions 237-495 (DVKTDLLGGG…EVTQRMNEVL (259 aa)) constitute a Protein kinase domain. ATP-binding positions include 243–251 (LGGGAYGKV) and Lys264. Asp359 functions as the Proton acceptor in the catalytic mechanism. Positions 597–707 (WFHFDISRDI…CPITEIKVPY (111 aa)) constitute an SH2 domain.

Belongs to the protein kinase superfamily. Ser/Thr protein kinase family. SH2 domain-containing protein kinase subfamily.

It is found in the membrane. The enzyme catalyses L-seryl-[protein] + ATP = O-phospho-L-seryl-[protein] + ADP + H(+). The catalysed reaction is L-threonyl-[protein] + ATP = O-phospho-L-threonyl-[protein] + ADP + H(+). Required for proper chemotaxis and phagocytosis; proper spatiotemporal control of F-actin levels in chemotaxing cells. Negative regulator of the PI3K (phosphatidylinositol 3 kinase) pathway. Predominantly phosphorylates serines and threonines and tyrosines at a lower level. This chain is Dual specificity protein kinase shkE (shkE), found in Dictyostelium discoideum (Social amoeba).